We begin with the raw amino-acid sequence, 322 residues long: Mas-related G-protein coupled receptor member X3 (322 aa).

The Extracellular portion of the chain corresponds to 1-31 (MDSTIPVLGTELTPINGREETPCYKQTLSFT). A helical membrane pass occupies residues 32–52 (GLTCIVSLVALTGNAVVLWLL). The Cytoplasmic segment spans residues 53–60 (GCRMRRNA). Residues 61–81 (VSIYILNLVAADFLFLSGHII) traverse the membrane as a helical segment. Residues 82-96 (CSPLRLINIRHPISK) lie on the Extracellular side of the membrane. A helical membrane pass occupies residues 97–117 (ILSPVMTFPYFIGLSMLSAIS). Over 118–140 (TERCLSILWPIWYHCRRPRYLSS) the chain is Cytoplasmic. Residues 141–161 (VMCVLLWALSLLRSILEWMFC) traverse the membrane as a helical segment. Residues 162 to 177 (DFLFSGANSVWCETSD) are Extracellular-facing. The helical transmembrane segment at 178 to 198 (FITIAWLVFLCVVLCGSSLVL) threads the bilayer. The Cytoplasmic portion of the chain corresponds to 199–213 (LVRILCGSRKMPLTR). A helical transmembrane segment spans residues 214–234 (LYVTILLTVLVFLLCGLPFGI). Residues 235–254 (QWALFSRIHLDWKVLFCHVH) lie on the Extracellular side of the membrane. A helical membrane pass occupies residues 255-275 (LVSIFLSALNSSANPIIYFFV). The Cytoplasmic portion of the chain corresponds to 276-322 (GSFRQRQNRQNLKLVLQRALQDTPEVDEGGGWLPQETLELSGSRLEQ).

This sequence belongs to the G-protein coupled receptor 1 family. Mas subfamily. In terms of tissue distribution, uniquely localized in a subset of small dorsal root and trigeminal sensory neurons.

It is found in the cell membrane. Orphan receptor. Probably involved in the function of nociceptive neurons. May regulate nociceptor function and/or development, including the sensation or modulation of pain. Potently activated by enkephalins. The protein is Mas-related G-protein coupled receptor member X3 (MRGPRX3) of Homo sapiens (Human).